The following is a 152-amino-acid chain: Large ribosomal subunit protein bL9 (152 aa).

It belongs to the bacterial ribosomal protein bL9 family.

Functionally, binds to the 23S rRNA. The protein is Large ribosomal subunit protein bL9 of Mycobacterium leprae (strain Br4923).